The following is a 443-amino-acid chain: Crh-like protein 2 (443 aa).

The signal sequence occupies residues 1-20; the sequence is MVRIGSSLLLATLAATTVSA. The GH16 domain maps to 21-306; the sequence is ASDPPKCSQD…TVECYDPPSG (286 aa). A disulfide bond links C56 and C67. Residue E164 is the Nucleophile of the active site. The active-site Proton donor is E168. E168 is a chitin binding site. 2 N-linked (GlcNAc...) asparagine glycosylation sites follow: N194 and N237. Chitin-binding residues include W257 and T268. 2 N-linked (GlcNAc...) asparagine glycosylation sites follow: N332 and N359. 2 stretches are compositionally biased toward low complexity: residues 350 to 367 and 378 to 410; these read ASSS…SANT and EPGN…SETS. A disordered region spans residues 350–420; the sequence is ASSSASGSAN…ASSNKNAAPS (71 aa). A compositionally biased stretch (polar residues) spans 411–420; it reads ASSNKNAAPS. A lipid anchor (GPI-like-anchor amidated asparagine) is attached at N416. Residues 417 to 443 constitute a propeptide, removed in mature form; sequence AAPSQNERVLNGSFFAVLVAVVALVTL. Residue N427 is glycosylated (N-linked (GlcNAc...) asparagine).

The protein belongs to the glycosyl hydrolase 16 family. CRH1 subfamily. Post-translationally, the GPI-like anchor contains a phosphoceramide lipid group. The anchor position has not been determined.

It localises to the cell membrane. Its subcellular location is the secreted. The protein localises to the cell wall. The catalysed reaction is Random endo-hydrolysis of N-acetyl-beta-D-glucosaminide (1-&gt;4)-beta-linkages in chitin and chitodextrins.. Its function is as follows. Dual chitinase/transglycosylase that plays a role in cell wall architecture. Chitinase and transglycosylase activities are coupled. Required for the polysaccharide cross-linking at the septa and the cell wall. More specifically, transfers chitin to 1,6-beta-glucan in the cell wall. The chain is Crh-like protein 2 from Aspergillus fumigatus (strain ATCC MYA-4609 / CBS 101355 / FGSC A1100 / Af293) (Neosartorya fumigata).